A 323-amino-acid chain; its full sequence is Aquaporin-4 (323 aa).

At 1–36 the chain is on the cytoplasmic side; that stretch reads MSDRPAARRWGKCGPLCTRESIMVAFKGVWTQTFWK. Residues Cys-13 and Cys-17 are each lipidated (S-palmitoyl cysteine). Residues 37-57 traverse the membrane as a helical segment; that stretch reads AVTAEFLAMLIFVLLSLGSTI. Topologically, residues 58-69 are extracellular; the sequence is NWGGAEKPLPVD. A helical membrane pass occupies residues 70–89; it reads MVLISLCFGLSIATMVQCFG. The Cytoplasmic portion of the chain corresponds to 90–93; it reads HISG. The discontinuously helical intramembrane region spans 94-101; sequence GHINPAVT. An NPA 1 motif is present at residues 97-99; sequence NPA. The Cytoplasmic portion of the chain corresponds to 102-115; that stretch reads VAMVCTRRISIAKS. A Phosphoserine; by PKG modification is found at Ser-111. The helical transmembrane segment at 116-136 threads the bilayer; the sequence is VFYIAAQCLGAIIGAGILYLV. The Extracellular portion of the chain corresponds to 137 to 155; that stretch reads TPPSVVGGLGVTTVHGNLS. N-linked (GlcNAc...) asparagine glycosylation is present at Asn-153. The chain crosses the membrane as a helical span at residues 156–176; sequence AGHGLLVELIITFQLVFTIFA. Residues 177–184 lie on the Cytoplasmic side of the membrane; that stretch reads SCDSKRTD. Ser-180 is modified (phosphoserine; by PKC). The helical transmembrane segment at 185–205 threads the bilayer; the sequence is VTGSIALAIGISVAIGHLFAI. Asn-206 carries N-linked (GlcNAc...) asparagine glycosylation. The Extracellular portion of the chain corresponds to 206 to 208; it reads NYT. Positions 209-222 form an intramembrane region, discontinuously helical; that stretch reads GASMNPARSFGPAV. An NPA 2 motif is present at residues 213-215; that stretch reads NPA. The Extracellular segment spans residues 223-231; it reads IMGNWENHW. The chain crosses the membrane as a helical span at residues 232–252; sequence IYWVGPIIGAVLAGGLYEYVF. The Cytoplasmic portion of the chain corresponds to 253 to 323; that stretch reads CPDVELKRRF…DPSGEVLSSV (71 aa). Phosphoserine occurs at positions 276 and 285. Thr-289 bears the Phosphothreonine mark. Position 321 is a phosphoserine (Ser-321).

Belongs to the MIP/aquaporin (TC 1.A.8) family. As to quaternary structure, homotetramer. The tetramers can form oligomeric arrays in membranes. The size of the oligomers differs between tissues and is smaller in skeletal muscle than in brain. Interaction between AQP4 oligomeric arrays in close-by cells can contribute to cell-cell adhesion. Part of a complex containing MLC1, TRPV4, HEPACAM and ATP1B1. Phosphorylation by PKC at Ser-180 reduces conductance by 50%. Phosphorylation by PKG at Ser-111 in response to glutamate increases conductance by 40%. In terms of processing, isoform 2: Palmitoylated on its N-terminal region. Isoform 1: Not palmitoylated. Detected in brain and lung.

Its subcellular location is the cell membrane. It localises to the basolateral cell membrane. It is found in the endosome membrane. The protein resides in the sarcolemma. The protein localises to the cell projection. The enzyme catalyses H2O(in) = H2O(out). In terms of biological role, forms a water-specific channel. Plays an important role in brain water homeostasis and in glymphatic solute transport. Required for a normal rate of water exchange across the blood brain interface. Required for normal levels of cerebrospinal fluid influx into the brain cortex and parenchyma along paravascular spaces that surround penetrating arteries, and for normal drainage of interstitial fluid along paravenous drainage pathways. Thereby, it is required for normal clearance of solutes from the brain interstitial fluid, including soluble beta-amyloid peptides derived from APP. Plays a redundant role in urinary water homeostasis and urinary concentrating ability. This is Aquaporin-4 (AQP4) from Bos taurus (Bovine).